Reading from the N-terminus, the 617-residue chain is Vacuolar protein sorting-associated protein 33B (617 aa).

Ala2 bears the N-acetylalanine mark.

The protein belongs to the STXBP/unc-18/SEC1 family. As to quaternary structure, interacts with RAB11A and VIPAS39. Associates with adaptor protein complex 3 (AP-3), clathrin:AP-3 and clathrin:HGS complexes. Post-translationally, phosphorylated on tyrosine residues. Ubiquitous.

It localises to the late endosome membrane. It is found in the lysosome membrane. The protein resides in the early endosome. The protein localises to the cytoplasmic vesicle. Its subcellular location is the clathrin-coated vesicle. It localises to the recycling endosome. May play a role in vesicle-mediated protein trafficking to lysosomal compartments and in membrane docking/fusion reactions of late endosomes/lysosomes. Mediates phagolysosomal fusion in macrophages. Proposed to be involved in endosomal maturation implicating VIPAS39. In epithelial cells, the VPS33B:VIPAS39 complex may play a role in the apical recycling pathway and in the maintenance of the apical-basolateral polarity. Seems to be involved in the sorting of specific cargos from the trans-Golgi network to alpha-granule-destined multivesicular bodies (MVBs) promoting MVBs maturation in megakaryocytes. The protein is Vacuolar protein sorting-associated protein 33B (Vps33b) of Rattus norvegicus (Rat).